The chain runs to 191 residues: Protein GrpE (191 aa).

The protein belongs to the GrpE family. Homodimer.

It is found in the cytoplasm. In terms of biological role, participates actively in the response to hyperosmotic and heat shock by preventing the aggregation of stress-denatured proteins, in association with DnaK and GrpE. It is the nucleotide exchange factor for DnaK and may function as a thermosensor. Unfolded proteins bind initially to DnaJ; upon interaction with the DnaJ-bound protein, DnaK hydrolyzes its bound ATP, resulting in the formation of a stable complex. GrpE releases ADP from DnaK; ATP binding to DnaK triggers the release of the substrate protein, thus completing the reaction cycle. Several rounds of ATP-dependent interactions between DnaJ, DnaK and GrpE are required for fully efficient folding. The sequence is that of Protein GrpE from Listeria monocytogenes serotype 4a (strain HCC23).